The chain runs to 694 residues: Acetolactate synthase catalytic subunit, mitochondrial (694 aa).

Residues 1–42 constitute a mitochondrion transit peptide; sequence MLRSRQATNALRAVGQTRPLRSQTAVAFTQSLNKVPSNRRSE. Low complexity predominate over residues 45–58; the sequence is VATASSTASGAFNS. A disordered region spans residues 45–69; that stretch reads VATASSTASGAFNSQVRPTPSPTFN. Positions 59-69 are enriched in polar residues; the sequence is QVRPTPSPTFN. Glutamate 140 contributes to the thiamine diphosphate binding site. Residues arginine 242, 358-379, and 410-429 contribute to the FAD site; these read HGSA…LGGR and EIMP…IVGD. Residues 505–585 are thiamine pyrophosphate binding; that stretch reads QHQMWTAQHF…VKVIVLNNEE (81 aa). Mg(2+) is bound by residues aspartate 556, asparagine 583, and glutamate 585.

It belongs to the TPP enzyme family. In terms of assembly, homodimer. Mg(2+) is required as a cofactor. The cofactor is thiamine diphosphate.

The protein localises to the mitochondrion. It catalyses the reaction 2 pyruvate + H(+) = (2S)-2-acetolactate + CO2. The enzyme catalyses 2-oxobutanoate + pyruvate + H(+) = (S)-2-ethyl-2-hydroxy-3-oxobutanoate + CO2. It functions in the pathway amino-acid biosynthesis; L-isoleucine biosynthesis; L-isoleucine from 2-oxobutanoate: step 1/4. The protein operates within amino-acid biosynthesis; L-valine biosynthesis; L-valine from pyruvate: step 1/4. Its function is as follows. Acetolactate synthase catalytic subunit, mitochondrial; part of the gene cluster that mediates the biosynthesis of chlorflavonin, a fungal flavonoid with acetolactate synthase inhibitory activity. Is not direcly involved in chlorflavonin biosynthesis but acts as a self-resistant protein that effectively confers chlorflavonin resistance to the native host. As a catalytic subunit of mitochondrial acetolactate synthase, catalyzes the first of a series of common steps in the biosynthesis of the branched-chain amino acids. Catalyzes the irreversible decarboxylation of pyruvate to a bound hydroxyethyl group that then condenses with either a second pyruvate molecule to form 2-acetolactate (AL) or with 2-ketobutyrate to form 2-aceto-2-hydroxybutyrate (AHB). The first product is the precursor for valine and leucine biosynthesis, while the second leads to isoleucine. The sequence is that of Acetolactate synthase catalytic subunit, mitochondrial from Aspergillus candidus.